Consider the following 331-residue polypeptide: Photosystem II assembly lipoprotein Ycf48 (331 aa).

The signal sequence occupies residues 1 to 23 (MIPVIRSFLSLLLCVGLTFGLGG). Cysteine 24 carries N-palmitoyl cysteine lipidation. Residue cysteine 24 is the site of S-diacylglycerol cysteine attachment.

It belongs to the Ycf48 family. As to quaternary structure, part of early PSII assembly complexes which includes D1 (psbA) and PsbI; not found in mature PSII. Binds to the lumenal side of PSII complexes. Interacts with YidC.

It localises to the cellular thylakoid membrane. Its function is as follows. A factor required for optimal assembly of photosystem II (PSII), acting in the early stages of PSII assembly. Also plays a role in replacement of photodamaged D1 (psbA). Assists YidC in synthesis of chlorophyll-binding proteins. This chain is Photosystem II assembly lipoprotein Ycf48, found in Synechococcus sp. (strain RCC307).